A 313-amino-acid chain; its full sequence is Olfactory receptor 5H15 (313 aa).

Residues 1–28 are Extracellular-facing; sequence MEEENATLLTEFVLTGFLYQPQWKIPLF. A glycan (N-linked (GlcNAc...) asparagine) is linked at Asn5. The helical transmembrane segment at 29-49 threads the bilayer; sequence LAFLVIYLITIMGNLGLIAVI. Topologically, residues 50 to 56 are cytoplasmic; the sequence is WKDPHLH. A helical membrane pass occupies residues 57 to 77; sequence IPMYLLLGNLAFVDAWISSTV. The Extracellular portion of the chain corresponds to 78–98; the sequence is TPKMLNNFLAKSKMISLSECK. An intrachain disulfide couples Cys97 to Cys179. Residues 99–119 traverse the membrane as a helical segment; the sequence is IQFFSIAIGVTTECFLLATMA. Residues 120–143 are Cytoplasmic-facing; the sequence is YDRYVAICKPLLYPAIMTNGLCIR. Residues 144–164 form a helical membrane-spanning segment; that stretch reads LLILSYIAGILHALIHEGFLF. The Extracellular segment spans residues 165–195; it reads RLTFCNSNIVHHIYCDTIPLSKISCTDSSIN. A helical membrane pass occupies residues 196–216; that stretch reads FLMVFIFSGSIQVFSIVTILI. The Cytoplasmic segment spans residues 217 to 240; that stretch reads SYTFVLFTVLEKKSDKGVRKAFST. The chain crosses the membrane as a helical span at residues 241–261; sequence CGAHLFSVCLYYGPLLLMYVG. The Extracellular portion of the chain corresponds to 262–271; it reads PASPQADGQN. The chain crosses the membrane as a helical span at residues 272–292; the sequence is MVEPLFYTVIIPLLNPIIYSL. The Cytoplasmic segment spans residues 293–313; sequence RNKQVIVSFIKMLKRNVKVSY.

The protein belongs to the G-protein coupled receptor 1 family.

It is found in the cell membrane. In terms of biological role, odorant receptor. This Homo sapiens (Human) protein is Olfactory receptor 5H15 (OR5H15).